Here is a 443-residue protein sequence, read N- to C-terminus: Threonine/serine transporter TdcC (443 aa).

Transmembrane regions (helical) follow at residues 22–42 (TTWT…FFPI), 44–64 (AGFG…PIAF), 97–117 (GVVI…IYGV), 140–160 (FVAL…KDLM), 163–183 (VMSY…LSLI), 207–227 (ILVT…FSPI), 259–279 (ASML…FTLS), 319–339 (ASII…LGTL), 366–386 (ISMI…PNIL), 389–409 (IEAM…MYAI), and 423–443 (DNVF…YKLF).

The protein belongs to the amino acid/polyamine transporter 2 family. SdaC/TdcC subfamily.

The protein resides in the cell inner membrane. It catalyses the reaction L-threonine(in) + H(+)(in) = L-threonine(out) + H(+)(out). It carries out the reaction L-serine(in) + H(+)(in) = L-serine(out) + H(+)(out). Functionally, involved in the import of threonine and serine into the cell, with the concomitant import of a proton (symport system). The sequence is that of Threonine/serine transporter TdcC from Salmonella newport (strain SL254).